Consider the following 148-residue polypeptide: 3-dehydroquinate dehydratase (148 aa).

Tyrosine 23 acts as the Proton acceptor in catalysis. Asparagine 75, histidine 81, and aspartate 88 together coordinate substrate. Histidine 101 functions as the Proton donor in the catalytic mechanism. Substrate is bound by residues 102–103 and arginine 112; that span reads LS.

It belongs to the type-II 3-dehydroquinase family. Homododecamer.

It catalyses the reaction 3-dehydroquinate = 3-dehydroshikimate + H2O. It functions in the pathway metabolic intermediate biosynthesis; chorismate biosynthesis; chorismate from D-erythrose 4-phosphate and phosphoenolpyruvate: step 3/7. In terms of biological role, catalyzes a trans-dehydration via an enolate intermediate. The protein is 3-dehydroquinate dehydratase of Xanthomonas axonopodis pv. citri (strain 306).